The following is a 130-amino-acid chain: MSSKATKTVKSKFDIINNQLRDDLIDFRSGDTIRVDVKIKEGYKFRIQSFEGLVIKTQGSGITYSVVVRKMSNGVFVERTFPLHSPIIDSVTLIKRGKVRRSRIYYIRKLSGKAARIKEIMPTKQAKEIK.

The protein belongs to the bacterial ribosomal protein bL19 family.

This protein is located at the 30S-50S ribosomal subunit interface and may play a role in the structure and function of the aminoacyl-tRNA binding site. The protein is Large ribosomal subunit protein bL19 of Mycoplasma mycoides subsp. mycoides SC (strain CCUG 32753 / NCTC 10114 / PG1).